The chain runs to 264 residues: Phosphonoacetaldehyde hydrolase (264 aa).

Aspartate 9 functions as the Nucleophile in the catalytic mechanism. Positions 9 and 11 each coordinate Mg(2+). Lysine 50 serves as the catalytic Schiff-base intermediate with substrate. Aspartate 183 provides a ligand contact to Mg(2+).

It belongs to the HAD-like hydrolase superfamily. PhnX family. In terms of assembly, homodimer. The cofactor is Mg(2+).

The catalysed reaction is phosphonoacetaldehyde + H2O = acetaldehyde + phosphate + H(+). Functionally, involved in phosphonate degradation. The protein is Phosphonoacetaldehyde hydrolase of Bacillus cytotoxicus (strain DSM 22905 / CIP 110041 / 391-98 / NVH 391-98).